The following is a 534-amino-acid chain: CTP synthase (534 aa).

The interval 1–267 is amidoligase domain; sequence MTKYIFVTGG…DQIVCDHLKL (267 aa). Ser13 contacts CTP. Ser13 contacts UTP. 14 to 19 contributes to the ATP binding site; the sequence is SIGKGI. Tyr54 contributes to the L-glutamine binding site. Asp71 lines the ATP pocket. Mg(2+) is bound by residues Asp71 and Glu141. CTP is bound by residues 148-150, 188-193, and Lys224; these read DIE and KTKPTQ. Residues 188–193 and Lys224 contribute to the UTP site; that span reads KTKPTQ. 240–242 is an ATP binding site; it reads RDV. The region spanning 292-534 is the Glutamine amidotransferase type-1 domain; the sequence is KIALVGKYVE…FVTAAIKNSN (243 aa). Gly354 is a binding site for L-glutamine. The active-site Nucleophile; for glutamine hydrolysis is the Cys381. L-glutamine contacts are provided by residues 382–385, Glu405, and Arg463; that span reads LGMQ. Active-site residues include His508 and Glu510.

Belongs to the CTP synthase family. In terms of assembly, homotetramer.

The catalysed reaction is UTP + L-glutamine + ATP + H2O = CTP + L-glutamate + ADP + phosphate + 2 H(+). The enzyme catalyses L-glutamine + H2O = L-glutamate + NH4(+). It catalyses the reaction UTP + NH4(+) + ATP = CTP + ADP + phosphate + 2 H(+). The protein operates within pyrimidine metabolism; CTP biosynthesis via de novo pathway; CTP from UDP: step 2/2. Its activity is regulated as follows. Allosterically activated by GTP, when glutamine is the substrate; GTP has no effect on the reaction when ammonia is the substrate. The allosteric effector GTP functions by stabilizing the protein conformation that binds the tetrahedral intermediate(s) formed during glutamine hydrolysis. Inhibited by the product CTP, via allosteric rather than competitive inhibition. In terms of biological role, catalyzes the ATP-dependent amination of UTP to CTP with either L-glutamine or ammonia as the source of nitrogen. Regulates intracellular CTP levels through interactions with the four ribonucleotide triphosphates. This chain is CTP synthase, found in Streptococcus pyogenes serotype M1.